The following is a 113-amino-acid chain: Mediator of RNA polymerase II transcription subunit 22 (113 aa).

Belongs to the Mediator complex subunit 22 family. As to quaternary structure, component of the Mediator complex.

Its subcellular location is the nucleus. Functionally, component of the Mediator complex, a coactivator involved in the regulated transcription of nearly all RNA polymerase II-dependent genes. Mediator functions as a bridge to convey information from gene-specific regulatory proteins to the basal RNA polymerase II transcription machinery. Mediator is recruited to promoters by direct interactions with regulatory proteins and serves as a scaffold for the assembly of a functional preinitiation complex with RNA polymerase II and the general transcription factors. This chain is Mediator of RNA polymerase II transcription subunit 22 (SRB6), found in Candida glabrata (strain ATCC 2001 / BCRC 20586 / JCM 3761 / NBRC 0622 / NRRL Y-65 / CBS 138) (Yeast).